A 212-amino-acid polypeptide reads, in one-letter code: HTH-type transcriptional regulator RutR (212 aa).

The HTH tetR-type domain maps to 17-77; the sequence is SAKKKAILSA…AVLRQILDIW (61 aa). The segment at residues 39–58 is a DNA-binding region (H-T-H motif); sequence TRLEQIAELAGVSKTNLLYY.

In terms of assembly, homodimer.

Its function is as follows. Master transcription regulator which represses the degradation of pyrimidines (rutABCDEFG) and purines (gcl operon) for maintenance of metabolic balance between pyrimidines and purines. It also regulates the synthesis of pyrimidine nucleotides and arginine from glutamine (carAB) and the supply of glutamate (gadABWX). This chain is HTH-type transcriptional regulator RutR (rutR), found in Escherichia coli O157:H7.